Consider the following 286-residue polypeptide: Phosphatidylserine decarboxylase proenzyme (286 aa).

Catalysis depends on charge relay system; for autoendoproteolytic cleavage activity residues Asp-90, His-147, and Ser-252. Ser-252 acts as the Schiff-base intermediate with substrate; via pyruvic acid; for decarboxylase activity in catalysis. Ser-252 bears the Pyruvic acid (Ser); by autocatalysis mark.

Belongs to the phosphatidylserine decarboxylase family. PSD-B subfamily. Prokaryotic type I sub-subfamily. In terms of assembly, heterodimer of a large membrane-associated beta subunit and a small pyruvoyl-containing alpha subunit. The cofactor is pyruvate. Is synthesized initially as an inactive proenzyme. Formation of the active enzyme involves a self-maturation process in which the active site pyruvoyl group is generated from an internal serine residue via an autocatalytic post-translational modification. Two non-identical subunits are generated from the proenzyme in this reaction, and the pyruvate is formed at the N-terminus of the alpha chain, which is derived from the carboxyl end of the proenzyme. The autoendoproteolytic cleavage occurs by a canonical serine protease mechanism, in which the side chain hydroxyl group of the serine supplies its oxygen atom to form the C-terminus of the beta chain, while the remainder of the serine residue undergoes an oxidative deamination to produce ammonia and the pyruvoyl prosthetic group on the alpha chain. During this reaction, the Ser that is part of the protease active site of the proenzyme becomes the pyruvoyl prosthetic group, which constitutes an essential element of the active site of the mature decarboxylase.

It localises to the cell membrane. The catalysed reaction is a 1,2-diacyl-sn-glycero-3-phospho-L-serine + H(+) = a 1,2-diacyl-sn-glycero-3-phosphoethanolamine + CO2. Its pathway is phospholipid metabolism; phosphatidylethanolamine biosynthesis; phosphatidylethanolamine from CDP-diacylglycerol: step 2/2. Catalyzes the formation of phosphatidylethanolamine (PtdEtn) from phosphatidylserine (PtdSer). The chain is Phosphatidylserine decarboxylase proenzyme from Azotobacter vinelandii (strain DJ / ATCC BAA-1303).